The following is a 292-amino-acid chain: Probable porphobilinogen deaminase (292 aa).

At Cys233 the chain carries S-(dipyrrolylmethanemethyl)cysteine.

The protein belongs to the HMBS family. The cofactor is dipyrromethane.

It carries out the reaction 4 porphobilinogen + H2O = hydroxymethylbilane + 4 NH4(+). It participates in porphyrin-containing compound metabolism; protoporphyrin-IX biosynthesis; coproporphyrinogen-III from 5-aminolevulinate: step 2/4. In terms of biological role, tetrapolymerization of the monopyrrole PBG into the hydroxymethylbilane pre-uroporphyrinogen in several discrete steps. The polypeptide is Probable porphobilinogen deaminase (hemC) (Methanocaldococcus jannaschii (strain ATCC 43067 / DSM 2661 / JAL-1 / JCM 10045 / NBRC 100440) (Methanococcus jannaschii)).